An 85-amino-acid polypeptide reads, in one-letter code: UPF0386 protein RL2079 (85 aa).

Belongs to the UPF0386 family.

This Rhizobium johnstonii (strain DSM 114642 / LMG 32736 / 3841) (Rhizobium leguminosarum bv. viciae) protein is UPF0386 protein RL2079.